A 631-amino-acid polypeptide reads, in one-letter code: Transmembrane and coiled-coil domain-containing protein 4 (631 aa).

The segment at 1–26 is disordered; sequence MATWNRPHPRLPVAPEPVAEGESQQP. Residues 153 to 183 adopt a coiled-coil conformation; it reads EEVFLESLKDAKEEESETAEESRKRKEKRRK. 4 consecutive transmembrane segments (helical) span residues 187 to 203, 204 to 220, 228 to 248, and 343 to 363; these read YLLI…VIGV, TGGL…ATII, LGSV…GAGL, and LSGI…ANVI. The disordered stretch occupies residues 523–631; that stretch reads WSEKGLPLAP…ETQESCAELD (109 aa). Positions 571 to 590 are enriched in polar residues; the sequence is IPSSASQAQVPAGLDQSTED.

The protein belongs to the TMCO4 family.

The protein resides in the membrane. The chain is Transmembrane and coiled-coil domain-containing protein 4 (Tmco4) from Rattus norvegicus (Rat).